We begin with the raw amino-acid sequence, 486 residues long: Cardiolipin synthase A (486 aa).

2 consecutive transmembrane segments (helical) span residues 3–23 (TFYTVVSWLVILGYWVLIAGV) and 38–58 (MAWLLIIYILPMVGIIAYLSV). 2 PLD phosphodiesterase domains span residues 219–246 (MDLRQHRKMVMIDNYIAYTGSMNMVDPR) and 399–426 (EGGLLHTKSVLVDGELSLVGTVNLDMRS). Catalysis depends on residues His224, Lys226, Asp231, His404, Lys406, and Asp411.

This sequence belongs to the phospholipase D family. Cardiolipin synthase subfamily. ClsA sub-subfamily.

The protein localises to the cell inner membrane. It carries out the reaction 2 a 1,2-diacyl-sn-glycero-3-phospho-(1'-sn-glycerol) = a cardiolipin + glycerol. Catalyzes the reversible phosphatidyl group transfer from one phosphatidylglycerol molecule to another to form cardiolipin (CL) (diphosphatidylglycerol) and glycerol. The chain is Cardiolipin synthase A from Salmonella gallinarum (strain 287/91 / NCTC 13346).